We begin with the raw amino-acid sequence, 382 residues long: MDNLFTFLHEIEDRYARTIFNFHLISCDEIGDIYGLMKERISSEDMFDNIVYNKDIHPAIKKLVYCDIQLTKHIINQNTYPVFNDSSQVKCCHYFDINSDNSNISSRTVEIFEREKSSLVSYIKTTNKKRKVNYGEIKKTVHGGTNANYFSGKKSDEYLSTTVRSNINQPWIKTISKRMRVDIINHSIVTRGKSSILQTIEIIFTNRTCVKIFKDSTMHIILSKDKDEKGCIHMIDKLFYVYYNLFLLFEDIIQNKYFNEVANIVNHVLTVTALDEKLFLIKKMAEHDVYGVSNFKIGMFNLTFIKSLDHTVFPSLLDEDSKIKFFKGKKLNIVALRSLDDCINYVTKSENMIEMMKERSTILNSIDIETESVDRLKELLLK.

The protein belongs to the poxviruses A23 family. Heterodimer of a 45 kDa and a 32 kDa subunit.

Functionally, acts with RNA polymerase to initiate transcription from intermediate gene promoters. This chain is Intermediate transcription factor 3 large subunit (VITF3L), found in Ectromelia virus (strain Moscow) (ECTV).